A 447-amino-acid polypeptide reads, in one-letter code: Argininosuccinate synthase (447 aa).

ATP contacts are provided by residues 17-25 and A43; that span reads AFSGGLDTS. Y99 serves as a coordination point for L-citrulline. G129 and T131 together coordinate ATP. The L-aspartate site is built by T131, N135, and D136. Residue N135 participates in L-citrulline binding. Residue D136 participates in ATP binding. R139 and S192 together coordinate L-citrulline. ATP is bound at residue D194. Positions 201, 203, and 280 each coordinate L-citrulline.

Belongs to the argininosuccinate synthase family. Type 2 subfamily. Homotetramer.

It is found in the cytoplasm. The enzyme catalyses L-citrulline + L-aspartate + ATP = 2-(N(omega)-L-arginino)succinate + AMP + diphosphate + H(+). It participates in amino-acid biosynthesis; L-arginine biosynthesis; L-arginine from L-ornithine and carbamoyl phosphate: step 2/3. In Salmonella agona (strain SL483), this protein is Argininosuccinate synthase.